A 299-amino-acid chain; its full sequence is Deoxyhypusine hydroxylase (299 aa).

HEAT-like PBS-type repeat units follow at residues 54–80 (LKHE…VLQD), 87–113 (VRHE…YSED), 174–200 (DRYR…GLRA), 205–231 (FRHE…ALRS), and 238–264 (VRHE…FAQD). Fe cation contacts are provided by His56, His89, and Glu90. Fe cation contacts are provided by His207, His240, and Glu241.

This sequence belongs to the deoxyhypusine hydroxylase family. Requires Fe(2+) as cofactor.

It catalyses the reaction [eIF5A protein]-deoxyhypusine + AH2 + O2 = [eIF5A protein]-hypusine + A + H2O. It participates in protein modification; eIF5A hypusination. Functionally, catalyzes the hydroxylation of the N(6)-(4-aminobutyl)-L-lysine intermediate produced by deoxyhypusine synthase/DHPS on a critical lysine of the eukaryotic translation initiation factor 5A/eIF-5A. This is the second step of the post-translational modification of that lysine into an unusual amino acid residue named hypusine. Hypusination is unique to mature eIF-5A factor and is essential for its function. The polypeptide is Deoxyhypusine hydroxylase (Gallus gallus (Chicken)).